The following is a 1024-amino-acid chain: MTMITDSLAVVLQRRDWENPGVTQLNRLAAHPPFASWRNSEEARTDRPSQQLRSLNGEWRFAWFPAPEAVPESWLECDLPDADTVVVPSNWQMHGYDAPIYTNVTYPITVNPPFVPAENPTGCYSLTFNIDESWLQEGQTRIIFDGVNSAFHLWCNGRWVGYGQDSRLPSEFDLSAFLHAGENRLAVMVLRWSDGSYLEDQDMWRMSGIFRDVSLLHKPTTQISDFQVTTRFNDDFSRAVLEAEVQMYGELRDELRVTVSLWQGETQVASGTAPFGGEIIDERGGYADRVTLRLNVENPELWSAEIPNLYRAVVELHTADGTLIEAEACDVGFREVRIENGLLLLNGKPLLIRGVNRHEHHPLHGQVMDEQTMVQDILLMKQNNFNAVRCSHYPNHPLWYTLCDRYGLYVVDEANIETHGMVPMNRLTDDPRWLPAMSERVTRMVQRDRNHPSVIIWSLGNESGHGANHDALYRWIKSVDPSRPVQYEGGGADTTATDIICPMYARVDEDQPFPAVPKWSIKKWLSLPGEMRPLILCEYAHAMGNSLGGFAKYWQAFRQYPRLQGGFVWDWVDQSLIKYDENGNPWSAYGGDFGDTPNDRQFCMNGLVFADRTPHPALTEAKHQQQFFQFRLSGRTIEVTSEYLFRHSDNEFLHWMVALDGKPLASGEVPLDVGPQGKQLIELPELPQPESAGQLWLTVRVVQPNATAWSEAGHISAWQQWRLAENLSVTLPSASHAIPQLTTSGTDFCIELGNKRWQFNRQSGFLSQMWIGDEKQLLTPLRDQFTRAPLDNDIGVSEATRIDPNAWVERWKAAGHYQAEAALLQCTADTLADAVLITTAHAWQHQGKTLFISRKTYRIDGHGEMVINVDVAVASDTPHPARIGLTCQLAQVSERVNWLGLGPQENYPDRLTAACFDRWDLPLSDMYTPYVFPSENGLRCGTRELNYGPHLWRGDFQFNISRYSQQQLMETSHRHLLHAEEGTWLNIDGFHMGIGGDDSWSPSVSAEFQLSAGRYHYQLVWCQK.

2 residues coordinate substrate: Asn-103 and Asp-202. Residue Asp-202 coordinates Na(+). Residues Glu-417, His-419, and Glu-462 each coordinate Mg(2+). Substrate-binding positions include Glu-462 and 538 to 541 (EYAH). The active-site Proton donor is the Glu-462. The active-site Nucleophile is the Glu-538. Asn-598 serves as a coordination point for Mg(2+). Residues Phe-602 and Asn-605 each contribute to the Na(+) site. Positions 605 and 1000 each coordinate substrate.

Belongs to the glycosyl hydrolase 2 family. As to quaternary structure, homotetramer. Requires Mg(2+) as cofactor. Na(+) serves as cofactor.

It catalyses the reaction Hydrolysis of terminal non-reducing beta-D-galactose residues in beta-D-galactosides.. The polypeptide is Beta-galactosidase (Escherichia coli O1:K1 / APEC).